We begin with the raw amino-acid sequence, 130 residues long: Ribosome-binding factor A (130 aa).

This sequence belongs to the RbfA family. Monomer. Binds 30S ribosomal subunits, but not 50S ribosomal subunits or 70S ribosomes.

The protein localises to the cytoplasm. Its function is as follows. One of several proteins that assist in the late maturation steps of the functional core of the 30S ribosomal subunit. Associates with free 30S ribosomal subunits (but not with 30S subunits that are part of 70S ribosomes or polysomes). Required for efficient processing of 16S rRNA. May interact with the 5'-terminal helix region of 16S rRNA. In Prochlorococcus marinus (strain MIT 9312), this protein is Ribosome-binding factor A.